We begin with the raw amino-acid sequence, 399 residues long: Insertion element IS900 uncharacterized 42 kDa protein (399 aa).

The protein belongs to the transposase IS1111A/IS1328/IS1533 family.

The polypeptide is Insertion element IS900 uncharacterized 42 kDa protein (Mycobacterium paratuberculosis).